Here is a 308-residue protein sequence, read N- to C-terminus: Peptidyl-prolyl cis-trans isomerase CYP8 (308 aa).

In terms of domain architecture, PPIase cyclophilin-type spans 56-215 (FTDPESSEEA…QPITIGYISS (160 aa)).

The enzyme catalyses [protein]-peptidylproline (omega=180) = [protein]-peptidylproline (omega=0). Its function is as follows. PPIases accelerate the folding of proteins. It catalyzes the cis-trans isomerization of proline imidic peptide bonds in oligopeptides. This chain is Peptidyl-prolyl cis-trans isomerase CYP8 (CPR8), found in Saccharomyces cerevisiae (strain ATCC 204508 / S288c) (Baker's yeast).